Here is a 178-residue protein sequence, read N- to C-terminus: CDP-archaeol synthase (178 aa).

A run of 5 helical transmembrane segments spans residues 3-23 (LLLLLFSAIWYILPAYVANAV), 56-76 (FFGILFGIITGILQHFIVILY), 91-111 (IILGFLLGTGALFGDMLGSFI), 123-143 (APLLDQMTFIVFALIFAYPLY), and 149-169 (LMVILLVISPIIHFSSNIIAY).

It belongs to the CDP-archaeol synthase family. Requires Mg(2+) as cofactor.

It localises to the cell membrane. It catalyses the reaction 2,3-bis-O-(geranylgeranyl)-sn-glycerol 1-phosphate + CTP + H(+) = CDP-2,3-bis-O-(geranylgeranyl)-sn-glycerol + diphosphate. It participates in membrane lipid metabolism; glycerophospholipid metabolism. In terms of biological role, catalyzes the formation of CDP-2,3-bis-(O-geranylgeranyl)-sn-glycerol (CDP-archaeol) from 2,3-bis-(O-geranylgeranyl)-sn-glycerol 1-phosphate (DGGGP) and CTP. This reaction is the third ether-bond-formation step in the biosynthesis of archaeal membrane lipids. This Methanococcus maripaludis (strain C7 / ATCC BAA-1331) protein is CDP-archaeol synthase.